The following is a 191-amino-acid chain: Protein GrpE (191 aa).

The segment at 1 to 49 is disordered; the sequence is MSEEKQTAEQVEAAEQEEVTEQAEQAASQEQHEETAGQEEALQHQIDEL. Over residues 12-21 the composition is skewed to acidic residues; sequence EAAEQEEVTE. The segment covering 30–49 has biased composition (basic and acidic residues); the sequence is EQHEETAGQEEALQHQIDEL.

This sequence belongs to the GrpE family. In terms of assembly, homodimer.

Its subcellular location is the cytoplasm. Functionally, participates actively in the response to hyperosmotic and heat shock by preventing the aggregation of stress-denatured proteins, in association with DnaK and GrpE. It is the nucleotide exchange factor for DnaK and may function as a thermosensor. Unfolded proteins bind initially to DnaJ; upon interaction with the DnaJ-bound protein, DnaK hydrolyzes its bound ATP, resulting in the formation of a stable complex. GrpE releases ADP from DnaK; ATP binding to DnaK triggers the release of the substrate protein, thus completing the reaction cycle. Several rounds of ATP-dependent interactions between DnaJ, DnaK and GrpE are required for fully efficient folding. This is Protein GrpE from Bacillus velezensis (strain DSM 23117 / BGSC 10A6 / LMG 26770 / FZB42) (Bacillus amyloliquefaciens subsp. plantarum).